The following is a 338-amino-acid chain: MKAAVLHEFGQSLQIEEVDIPTPGAGEIVVKMQASGVCHTDLHAVEGDWPVKPSPPFIPGHEGVGLITAVGEGVTHVKEGDRVGVAWLYSACGHCTHCLGGWETLCESQQNSGYSVNGSFAEYVLANANYVGIIPESVDSIEIAPVLCAGVTVYKGLKMTDTKPGDWVVISGIGGLGHMAVQYAIAMGLNVAAVDIDDDKLAFAKKLGAKVTVNAKNTDPAEYLQKEIGGAHGALVTAVSAKAFDQALSMLRRGGTLVCNGLPPGDFPVSIFDTVLNGITIRGSIVGTRLDLQESLDMAAAGKVKATVTAEPLENINDIFERMRQGKIEGRIVIDYTM.

The Zn(2+) site is built by Cys-38, His-61, Glu-62, Cys-92, Cys-95, Cys-98, Cys-106, and Cys-148.

It belongs to the zinc-containing alcohol dehydrogenase family. In terms of assembly, homotetramer. It depends on Zn(2+) as a cofactor.

The catalysed reaction is a primary alcohol + NAD(+) = an aldehyde + NADH + H(+). It catalyses the reaction a secondary alcohol + NAD(+) = a ketone + NADH + H(+). The enzyme catalyses ethanol + NAD(+) = acetaldehyde + NADH + H(+). It carries out the reaction 1-propanol + NAD(+) = propanal + NADH + H(+). The catalysed reaction is butan-1-ol + NAD(+) = butanal + NADH + H(+). It catalyses the reaction propan-2-ol + NAD(+) = acetone + NADH + H(+). Psychrophilic alcohol dehydrogenase that exhibits a wide range of substrate specificity, oxidizing mainly primary and secondary aliphatic alcohols, utilizing NAD(+) as a cosubstrate. In vitro, shows highest reaction rates for ethanol as a substrate and gradually decreases its reaction rates as the length and branching of the carbon chain of the alcohol substrates increase. To a lesser extent, is also able to reduce aldehydes and ketones. Do not catalyze the further oxidation of aldehydes to carboxylic acids. Cannot use NADP(+) instead of NAD(+). This chain is Alcohol dehydrogenase, found in Moraxella sp. (strain TAE123).